We begin with the raw amino-acid sequence, 151 residues long: Phospholipase A2 inhibitor BjussuMIP (151 aa).

The signal sequence occupies residues 1–4 (LANG). Residues 31 to 146 (LKYAFLTVHK…CDENLLVVCE (116 aa)) enclose the C-type lectin domain. Disulfide bonds link Cys-68–Cys-145 and Cys-123–Cys-137. Asn-107 is a glycosylation site (N-linked (GlcNAc...) asparagine).

Belongs to the alpha-type phospholipase A2 inhibitor family. Oligomer. Expressed by the liver.

The protein resides in the secreted. Functionally, inhibits enzymatic, anticoagulant, edema formation, myotoxicity activities induced by snakes phospholipase A2. Is oligomeric, but it is probable that each of its subunits can bind and inactive a PLA2 molecule. This chain is Phospholipase A2 inhibitor BjussuMIP, found in Bothrops jararacussu (Jararacussu).